Here is a 226-residue protein sequence, read N- to C-terminus: MAALLITATDTEVGKTVLTTSLTAYWQTYRGKKGLGLMKLLQTGVGDQERYHQLFGADSSIEIKVPLWFKTPVAPPVAAAAEGKTIDLKRVWQEFCALQQRQSFVLLEALGGLGSPVTEELTVADIAGQWRLETVLVVPVKLGAIAQAVANVALARQHQIKLKGIILNCSQPISEEQLKDWTPINLIQSLTSTPVLGILPYISDLNDLEKLTQAASTLDLEKLLPL.

12–17 (EVGKTV) is an ATP binding site. Thr16 is a binding site for Mg(2+). Lys39 is a catalytic residue. Position 43 (Thr43) interacts with substrate. Residues Asp47, 108-111 (EALG), 168-169 (NC), and 200-202 (PYI) each bind ATP. The Mg(2+) site is built by Asp47 and Glu108.

Belongs to the dethiobiotin synthetase family. In terms of assembly, homodimer. Mg(2+) is required as a cofactor.

It is found in the cytoplasm. It catalyses the reaction (7R,8S)-7,8-diammoniononanoate + CO2 + ATP = (4R,5S)-dethiobiotin + ADP + phosphate + 3 H(+). The catalysed reaction is (7R,8S)-8-amino-7-(carboxyamino)nonanoate + ATP = (4R,5S)-dethiobiotin + ADP + phosphate + H(+). It participates in cofactor biosynthesis; biotin biosynthesis; biotin from 7,8-diaminononanoate: step 1/2. In terms of biological role, catalyzes a mechanistically unusual reaction, the ATP-dependent insertion of CO2 between the N7 and N8 nitrogen atoms of 7,8-diaminopelargonic acid (DAPA, also called 7,8-diammoniononanoate) to form a ureido ring. This cyanobacterium does not encode bioA (which catalyzes the formation of the precursor for this reaction in the cannonical pathway), instead it encodes bioU, which replaces bioA and also performs the first half of the cannonical BioD reaction. Thus in this organism BioD has a different substrate. The chain is ATP-dependent dethiobiotin synthetase BioD from Gloeothece citriformis (strain PCC 7424) (Cyanothece sp. (strain PCC 7424)).